Here is a 493-residue protein sequence, read N- to C-terminus: Probable cytosol aminopeptidase (493 aa).

Lys260 and Asp265 together coordinate Mn(2+). Lys272 is an active-site residue. 3 residues coordinate Mn(2+): Asp284, Asp343, and Glu345. The active site involves Arg347.

The protein belongs to the peptidase M17 family. Mn(2+) is required as a cofactor.

The protein resides in the cytoplasm. It carries out the reaction Release of an N-terminal amino acid, Xaa-|-Yaa-, in which Xaa is preferably Leu, but may be other amino acids including Pro although not Arg or Lys, and Yaa may be Pro. Amino acid amides and methyl esters are also readily hydrolyzed, but rates on arylamides are exceedingly low.. It catalyses the reaction Release of an N-terminal amino acid, preferentially leucine, but not glutamic or aspartic acids.. In terms of biological role, presumably involved in the processing and regular turnover of intracellular proteins. Catalyzes the removal of unsubstituted N-terminal amino acids from various peptides. This Nostoc punctiforme (strain ATCC 29133 / PCC 73102) protein is Probable cytosol aminopeptidase.